Consider the following 400-residue polypeptide: Acetate kinase (400 aa).

Asn-7 contacts Mg(2+). Lys-14 contributes to the ATP binding site. Position 90 (Arg-90) interacts with substrate. Asp-147 (proton donor/acceptor) is an active-site residue. Residues His-207–Gly-211, Asp-282–Arg-284, and Gly-331–Asn-335 contribute to the ATP site. Mg(2+) is bound at residue Glu-384.

The protein belongs to the acetokinase family. Homodimer. It depends on Mg(2+) as a cofactor. Mn(2+) is required as a cofactor.

The protein localises to the cytoplasm. It catalyses the reaction acetate + ATP = acetyl phosphate + ADP. It functions in the pathway metabolic intermediate biosynthesis; acetyl-CoA biosynthesis; acetyl-CoA from acetate: step 1/2. In terms of biological role, catalyzes the formation of acetyl phosphate from acetate and ATP. Can also catalyze the reverse reaction. This Thermoanaerobacterium thermosaccharolyticum (strain ATCC 7956 / DSM 571 / NCIMB 9385 / NCA 3814 / NCTC 13789 / WDCM 00135 / 2032) (Clostridium thermosaccharolyticum) protein is Acetate kinase.